A 263-amino-acid polypeptide reads, in one-letter code: Polyglutamine-binding protein 1 (263 aa).

The 35-residue stretch at 46 to 80 folds into the WW domain; the sequence is EGLPPSWYKVFDPSCGLPYYWNVETDLVSWLSPHD. The segment at 94–263 is disordered; that stretch reads NSNADAEDKS…AEASRSKQQD (170 aa). The span at 99-173 shows a compositional bias: basic and acidic residues; the sequence is AEDKSERNLE…DKADREDGKD (75 aa). A 1-1; approximate repeat occupies 104-110; sequence ERNLEKV. The tract at residues 104–138 is 5 X 7 AA approximate tandem repeats of D-R-[NS]-H-E-K-S; sequence ERNLEKVDRNHEKSDRSHEKPDRSHEKADRNHEKS. One copy of the 1-2 repeat lies at 111–117; sequence DRNHEKS. Residues 118-124 form a 1-3; approximate repeat; that stretch reads DRSHEKP. The 1-4; approximate repeat unit spans residues 125-131; it reads DRSHEKA. 10 tandem repeats follow at residues 132 to 138, 139 to 140, 141 to 142, 143 to 144, 150 to 151, 152 to 153, 154 to 155, 156 to 157, 158 to 159, and 160 to 161. The tract at residues 139–144 is 3 X 2 AA tandem repeats of [DE]-R; that stretch reads DRERER. The interval 150 to 161 is 6 X 2 AA tandem repeats of [DE]-R; that stretch reads DRERDRDRERER. The important for interaction with TXNL4A stretch occupies residues 243 to 253; it reads YPSPGAVLRAN. Ser245 carries the phosphoserine modification.

As to quaternary structure, interacts with POU3F2/Brn-2, ATXN1, TXNL4A, HTT and AR. Interaction with ATXN1 correlates positively with the length of the polyglutamine tract. Interacts with RNA polymerase II large subunit in a phosphorylation-dependent manner. Forms a ternary complex with ATXN1 mutant and phosphorylated RNA polymerase II. Interacts (via C-terminus) with TXNL4A and CD2BP2. Interacts (via WW domain) with ATN1 and SF3B1, and may interact with additional splice factors. Interacts (via WW domain) with WBP11; Leading to reduce interaction between PQBP1 and TXNL4A. Interacts with CAPRIN1. Interacts with DDX1. Interacts with SFPQ. Interacts with KHSRP.

It is found in the nucleus. Its subcellular location is the nucleus speckle. It localises to the cytoplasmic granule. Intrinsically disordered protein that acts as a scaffold, and which is involved in different processes, such as pre-mRNA splicing, transcription regulation, innate immunity and neuron development. Interacts with splicing-related factors via the intrinsically disordered region and regulates alternative splicing of target pre-mRNA species. May suppress the ability of POU3F2 to transactivate the DRD1 gene in a POU3F2 dependent manner. Can activate transcription directly or via association with the transcription machinery. May be involved in ATXN1 mutant-induced cell death. The interaction with ATXN1 mutant reduces levels of phosphorylated RNA polymerase II large subunit. Involved in the assembly of cytoplasmic stress granule, possibly by participating in the transport of neuronal RNA granules. Also acts as an innate immune sensor of infection by retroviruses, by detecting the presence of reverse-transcribed DNA in the cytosol. Directly binds retroviral reverse-transcribed DNA in the cytosol and interacts with CGAS, leading to activate the cGAS-STING signaling pathway, triggering type-I interferon production. The sequence is that of Polyglutamine-binding protein 1 (Pqbp1) from Rattus norvegicus (Rat).